The following is a 216-amino-acid chain: ATP synthase subunit a (216 aa).

A run of 7 helical transmembrane segments spans residues 1 to 21, 62 to 82, 88 to 108, 119 to 139, 149 to 169, 174 to 194, and 196 to 216; these read MEYS…IFVL, LIAA…VPGF, NINT…FEGF, FMGP…ISHI, LFAN…LVIK, LVVS…AIFI, and TYIF…HEEH.

It belongs to the ATPase A chain family. F-type ATPases have 2 components, CF(1) - the catalytic core - and CF(0) - the membrane proton channel. CF(1) has five subunits: alpha(3), beta(3), gamma(1), delta(1), epsilon(1). CF(0) has three main subunits: a(1), b(2) and c(9-12). The alpha and beta chains form an alternating ring which encloses part of the gamma chain. CF(1) is attached to CF(0) by a central stalk formed by the gamma and epsilon chains, while a peripheral stalk is formed by the delta and b chains.

It localises to the cell inner membrane. Its function is as follows. Key component of the proton channel; it plays a direct role in the translocation of protons across the membrane. The polypeptide is ATP synthase subunit a (Aquifex aeolicus (strain VF5)).